The chain runs to 333 residues: N-acetyl-gamma-glutamyl-phosphate reductase (333 aa).

The active site involves cysteine 145.

It belongs to the NAGSA dehydrogenase family. Type 1 subfamily.

It localises to the cytoplasm. The catalysed reaction is N-acetyl-L-glutamate 5-semialdehyde + phosphate + NADP(+) = N-acetyl-L-glutamyl 5-phosphate + NADPH + H(+). It functions in the pathway amino-acid biosynthesis; L-arginine biosynthesis; N(2)-acetyl-L-ornithine from L-glutamate: step 3/4. Its function is as follows. Catalyzes the NADPH-dependent reduction of N-acetyl-5-glutamyl phosphate to yield N-acetyl-L-glutamate 5-semialdehyde. The protein is N-acetyl-gamma-glutamyl-phosphate reductase of Salinispora arenicola (strain CNS-205).